The following is a 261-amino-acid chain: Potassium/proton antiporter CemA (261 aa).

2 helical membrane passes run 47-67 (FLVF…GPWV) and 138-158 (IISH…YFIM).

It belongs to the CemA family.

It is found in the plastid. The protein localises to the chloroplast inner membrane. The catalysed reaction is K(+)(in) + H(+)(out) = K(+)(out) + H(+)(in). Contributes to K(+)/H(+) antiport activity by supporting proton efflux to control proton extrusion and homeostasis in chloroplasts in a light-dependent manner to modulate photosynthesis. Prevents excessive induction of non-photochemical quenching (NPQ) under continuous-light conditions. Indirectly promotes efficient inorganic carbon uptake into chloroplasts. The chain is Potassium/proton antiporter CemA from Ginkgo biloba (Ginkgo).